A 483-amino-acid polypeptide reads, in one-letter code: uncharacterized protein (483 aa).

It localises to the nucleus. Its subcellular location is the mitochondrion. This is an uncharacterized protein from Saccharomyces cerevisiae (strain ATCC 204508 / S288c) (Baker's yeast).